The sequence spans 380 residues: MFYALGPLALFAFATEVMATPVAYPMTTASPTLAKRDSCTFSGSDGAASASRSQTDCATITLSDITVPSGTTLDLSDLEDDTTVIFEGTTSWEYEEWDGPLLQIKGNGITIKGADGAKLNPDGSRWWDGEGSNGGVTKPKFFYAHDLTDSTIQNLYIENTPVQAVSINGCDGLTITDMTIDNSAGDDAGGHNTDGFDIGESSNVVITGAKVYNQDDCVAVNSGTSITFSGGTCSGGHGLSIGSVGGRDDNTVDTVTFKDSTVSNSVNGIRIKAKSGETGEIKGVTYSGISLESISDYGILIEQNYDGGDLDGEVTSGIPITDLTIENISGSGAVDSDGYNIVIVCGDDACSNWTWSDVEVTGGEDYGSCENVPSVASCST.

Positions 1-19 (MFYALGPLALFAFATEVMA) are cleaved as a signal peptide. Residues 20–35 (TPVAYPMTTASPTLAK) constitute a propeptide that is removed on maturation. An intrachain disulfide couples C39 to C57. 7 PbH1 repeats span residues 147 to 169 (LTDS…SING), 170 to 200 (CDGL…DIGE), 201 to 222 (SSNV…AVNS), 223 to 243 (GTSI…SIGS), 252 to 273 (VDTV…RIKA), 281 to 303 (IKGV…LIEQ), and 315 to 338 (TSGI…DSDG). D215 acts as the Proton donor in catalysis. The cysteines at positions 217 and 233 are disulfide-linked. H237 is an active-site residue. N327 is a glycosylation site (N-linked (GlcNAc...) asparagine). A disulfide bridge connects residues C345 and C350. The N-linked (GlcNAc...) asparagine glycan is linked to N352. A disulfide bridge links C369 with C378.

The protein belongs to the glycosyl hydrolase 28 family.

The protein localises to the secreted. It carries out the reaction (1,4-alpha-D-galacturonosyl)n+m + H2O = (1,4-alpha-D-galacturonosyl)n + (1,4-alpha-D-galacturonosyl)m.. Its function is as follows. Involved in maceration and soft-rotting of plant tissue. Hydrolyzes the 1,4-alpha glycosidic bonds of de-esterified pectate in the smooth region of the plant cell wall. The polypeptide is Endopolygalacturonase AN8327 (Emericella nidulans (strain FGSC A4 / ATCC 38163 / CBS 112.46 / NRRL 194 / M139) (Aspergillus nidulans)).